We begin with the raw amino-acid sequence, 542 residues long: Chaperonin GroEL (542 aa).

ATP is bound by residues 29 to 32 (TMGP), lysine 50, 86 to 90 (DGTTT), glycine 414, 477 to 479 (NAA), and aspartate 493.

Belongs to the chaperonin (HSP60) family. In terms of assembly, forms a cylinder of 14 subunits composed of two heptameric rings stacked back-to-back. Interacts with the co-chaperonin GroES.

It is found in the cytoplasm. The catalysed reaction is ATP + H2O + a folded polypeptide = ADP + phosphate + an unfolded polypeptide.. Functionally, together with its co-chaperonin GroES, plays an essential role in assisting protein folding. The GroEL-GroES system forms a nano-cage that allows encapsulation of the non-native substrate proteins and provides a physical environment optimized to promote and accelerate protein folding. The sequence is that of Chaperonin GroEL from Sulfurovum sp. (strain NBC37-1).